Here is a 1063-residue protein sequence, read N- to C-terminus: ATP-dependent helicase hrq1 (1063 aa).

The disordered stretch occupies residues Thr-224 to Ser-243. The 184-residue stretch at Ile-320–Leu-503 folds into the Helicase ATP-binding domain. An ATP-binding site is contributed by Thr-333–Ser-340. Positions Asp-444–His-447 match the DEAH box motif. A Helicase C-terminal domain is found at Glu-539–Glu-717.

Belongs to the helicase family. HRQ1 subfamily. Forms heptamer rings. Interacts with rhp14. Mg(2+) serves as cofactor.

Its subcellular location is the nucleus. The enzyme catalyses Couples ATP hydrolysis with the unwinding of duplex DNA by translocating in the 3'-5' direction.. It carries out the reaction ATP + H2O = ADP + phosphate + H(+). In terms of biological role, helicase with 3'-5' helicase activity involved in genome stability. Functions in the nucleotide excision repair (NER) pathway and plays a critical role in DNA interstrand cross-link repair. Unwinds relatively long duplex DNA up to 120-bp and requires a long 3'-tail of at least 70 nucleotides for efficient unwinding of duplex DNA. Shows both processive helicase and DNA strand annealing activities. Affects telomere length by a non-catalytic mechanism, probably through inhibiting telomerase by competing with it for ssDNA binding. This chain is ATP-dependent helicase hrq1, found in Schizosaccharomyces pombe (strain 972 / ATCC 24843) (Fission yeast).